The sequence spans 76 residues: Kappa-actitoxin-Avd4a (76 aa).

Residues 1-19 form the signal peptide; sequence MNKALFLCLVVLCAAVVFA. Residues 20–31 constitute a propeptide that is removed on maturation; the sequence is AEDLQKAKHAPF. Intrachain disulfides connect Cys37–Cys72, Cys39–Cys65, and Cys55–Cys73.

The protein belongs to the sea anemone type 3 (BDS) potassium channel toxin family. Highly expressed in the ectodermal tissue from the distal and proximal tentacles, body wall, and oral disk.

The protein resides in the secreted. It is found in the nematocyst. Acts as a gating modifier on both Kv and Nav ion channels, and also acts on blood pressure. Voltage-dependently inhibits voltage-gated potassium channels Kv3 (Kv3.1/KCNC1, Kv3.2/KCNC2 and Kv3.4/KCNC4) and slows inactivation of the voltage-gated sodium channel Nav1.7/SCN9A. Inhibits all Kv3.1, Kv3.2 and Kv3.4 by about 50% when tested at a voltage of +40 mV (45%, 48% and 56%, respectively). May act by binding residues in voltage-sensing domains S3b and S4 of Kv3. On sodium channels, tests have been done on human Nav1.7/SCN9A (expressed in HEK293 cells) (EC(50)=3 nM) and rat SCG neurons that mostly carry Nav1.7 channels (EC(50)=300 nM). This toxin also reduces blood pressure. This is Kappa-actitoxin-Avd4a from Anemonia viridis (Snakelocks anemone).